The chain runs to 417 residues: Tyrosine--tRNA ligase (417 aa).

Tyrosine 34 contributes to the L-tyrosine binding site. Positions 39-48 (PSGDSLHIGH) match the 'HIGH' region motif. The L-tyrosine site is built by tyrosine 165 and glutamine 169. A 'KMSKS' region motif is present at residues 227-231 (KFGKT). Position 230 (lysine 230) interacts with ATP. The S4 RNA-binding domain maps to 349-415 (ANIVDWLVDT…GKKNYTLAKV (67 aa)).

The protein belongs to the class-I aminoacyl-tRNA synthetase family. TyrS type 1 subfamily. Homodimer.

It is found in the cytoplasm. The enzyme catalyses tRNA(Tyr) + L-tyrosine + ATP = L-tyrosyl-tRNA(Tyr) + AMP + diphosphate + H(+). In terms of biological role, catalyzes the attachment of tyrosine to tRNA(Tyr) in a two-step reaction: tyrosine is first activated by ATP to form Tyr-AMP and then transferred to the acceptor end of tRNA(Tyr). This is Tyrosine--tRNA ligase from Limosilactobacillus fermentum (strain NBRC 3956 / LMG 18251) (Lactobacillus fermentum).